The primary structure comprises 1057 residues: Probable sucrose-phosphate synthase 1 (1057 aa).

Basic and acidic residues predominate over residues Arg103–Thr115. Disordered regions lie at residues Arg103–Ser143, Pro439–Asp459, and Arg670–Leu693. Residues Gly442–Glu452 show a composition bias toward acidic residues.

Belongs to the glycosyltransferase 1 family. Homodimer or homotetramer.

It carries out the reaction beta-D-fructose 6-phosphate + UDP-alpha-D-glucose = sucrose 6(F)-phosphate + UDP + H(+). It participates in glycan biosynthesis; sucrose biosynthesis; sucrose from D-fructose 6-phosphate and UDP-alpha-D-glucose: step 1/2. Its activity is regulated as follows. Activity is regulated by phosphorylation and moderated by concentration of metabolites and light. In terms of biological role, plays a role in photosynthetic sucrose synthesis by catalyzing the rate-limiting step of sucrose biosynthesis from UDP-glucose and fructose- 6-phosphate. Involved in the regulation of carbon partitioning in the leaves of plants. May regulate the synthesis of sucrose and therefore play a major role as a limiting factor in the export of photoassimilates out of the leaf. Plays a role for sucrose availability that is essential for plant growth and fiber elongation. The protein is Probable sucrose-phosphate synthase 1 (SPS1) of Citrus unshiu (Satsuma mandarin).